Consider the following 88-residue polypeptide: ATP synthase F(0) complex subunit f, mitochondrial (88 aa).

Alanine 2 is modified (N-acetylalanine). Serine 3 bears the Phosphoserine mark. At lysine 16 the chain carries N6-acetyllysine. The chain crosses the membrane as a helical span at residues 62–79 (MVLAAYVVFSYCISYKEL).

The protein belongs to the ATPase F chain family. Component of the ATP synthase complex composed at least of ATP5F1A/subunit alpha, ATP5F1B/subunit beta, ATP5MC1/subunit c (homooctomer), MT-ATP6/subunit a, MT-ATP8/subunit 8, ATP5ME/subunit e, ATP5MF/subunit f, ATP5MG/subunit g, ATP5MK/subunit k, ATP5MJ/subunit j, ATP5F1C/subunit gamma, ATP5F1D/subunit delta, ATP5F1E/subunit epsilon, ATP5PF/subunit F6, ATP5PB/subunit b, ATP5PD/subunit d, ATP5PO/subunit OSCP. ATP synthase complex consists of a soluble F(1) head domain (subunits alpha(3) and beta(3)) - the catalytic core - and a membrane F(0) domain - the membrane proton channel (subunits c, a, 8, e, f, g, k and j). These two domains are linked by a central stalk (subunits gamma, delta, and epsilon) rotating inside the F1 region and a stationary peripheral stalk (subunits F6, b, d, and OSCP).

The protein localises to the mitochondrion. It localises to the mitochondrion inner membrane. Subunit f, of the mitochondrial membrane ATP synthase complex (F(1)F(0) ATP synthase or Complex V) that produces ATP from ADP in the presence of a proton gradient across the membrane which is generated by electron transport complexes of the respiratory chain. ATP synthase complex consist of a soluble F(1) head domain - the catalytic core - and a membrane F(1) domain - the membrane proton channel. These two domains are linked by a central stalk rotating inside the F(1) region and a stationary peripheral stalk. During catalysis, ATP synthesis in the catalytic domain of F(1) is coupled via a rotary mechanism of the central stalk subunits to proton translocation. In vivo, can only synthesize ATP although its ATP hydrolase activity can be activated artificially in vitro. Part of the complex F(0) domain. In Rattus norvegicus (Rat), this protein is ATP synthase F(0) complex subunit f, mitochondrial.